The sequence spans 481 residues: Two-component response regulator ORR32 (481 aa).

A Response regulatory domain is found at 13–138; the sequence is HVMLVDDDTK…TIALWRVVAW (126 aa). 4-aspartylphosphate is present on aspartate 66.

This sequence belongs to the ARR family. Type-B subfamily. Two-component system major event consists of a His-to-Asp phosphorelay between a sensor histidine kinase (HK) and a response regulator (RR). In plants, the His-to-Asp phosphorelay involves an additional intermediate named Histidine-containing phosphotransfer protein (HPt). This multistep phosphorelay consists of a His-Asp-His-Asp sequential transfer of a phosphate group between first a His and an Asp of the HK protein, followed by the transfer to a conserved His of the HPt protein and finally the transfer to an Asp in the receiver domain of the RR protein.

Functions as a response regulator involved in His-to-Asp phosphorelay signal transduction system. Phosphorylation of the Asp residue in the receiver domain activates the ability of the protein to promote the transcription of target genes. May directly activate some type-A response regulators in response to cytokinins. This chain is Two-component response regulator ORR32, found in Oryza sativa subsp. japonica (Rice).